The following is a 343-amino-acid chain: D-alanine--D-alanine ligase (343 aa).

An ATP-grasp domain is found at 132 to 337; it reads KNLFSYHKIP…YPDLIDKLIE (206 aa). 165–220 lines the ATP pocket; the sequence is DRFLGWPCFVKPANMGSSIGVSKVHSPGEVKKALEKGFYYDRKLIFEEFVEGREIE. Mg(2+) is bound by residues Asp-291, Glu-304, and Asn-306.

This sequence belongs to the D-alanine--D-alanine ligase family. Mg(2+) serves as cofactor. The cofactor is Mn(2+).

It localises to the cytoplasm. The catalysed reaction is 2 D-alanine + ATP = D-alanyl-D-alanine + ADP + phosphate + H(+). It participates in cell wall biogenesis; peptidoglycan biosynthesis. In terms of biological role, cell wall formation. The protein is D-alanine--D-alanine ligase of Halothermothrix orenii (strain H 168 / OCM 544 / DSM 9562).